The primary structure comprises 607 residues: DNA primase (607 aa).

The segment at 39-63 adopts a CHC2-type zinc-finger fold; that stretch reads CPFHDDKNPSMSISSSKNIFKCWAC. The Toprim domain occupies 267 to 350; that stretch reads NQLFIVEGYF…IVEIVQWEHN (84 aa). Glu-273, Asp-319, and Asp-321 together coordinate Mg(2+).

It belongs to the DnaG primase family. As to quaternary structure, monomer. Interacts with DnaB. Zn(2+) is required as a cofactor. Mg(2+) serves as cofactor.

It catalyses the reaction ssDNA + n NTP = ssDNA/pppN(pN)n-1 hybrid + (n-1) diphosphate.. In terms of biological role, RNA polymerase that catalyzes the synthesis of short RNA molecules used as primers for DNA polymerase during DNA replication. The polypeptide is DNA primase (Mycoplasma genitalium (strain ATCC 33530 / DSM 19775 / NCTC 10195 / G37) (Mycoplasmoides genitalium)).